Here is a 225-residue protein sequence, read N- to C-terminus: Glutathione S-transferase-like protein tpcF (225 aa).

Positions 4 to 85 constitute a GST N-terminal domain; it reads IQPITVYGKG…YLVSHYDPDH (82 aa). A GST C-terminal domain is found at 92-225; the sequence is GSNLAALATQ…KGMADIFPST (134 aa).

The protein belongs to the GST superfamily. As to expression, specifically expressed in conidia.

It participates in secondary metabolite biosynthesis. In terms of biological role, glutathione S-transferase-like protein; part of the gene cluster that mediates the biosynthesis of trypacidin, a mycotoxin with antiprotozoal activity and that plays a role in the infection process. The pathway begins with the synthesis of atrochrysone thioester by the polyketide synthase (PKS) tpcC. The atrochrysone carboxyl ACP thioesterase tpcB then breaks the thioester bond and releases the atrochrysone carboxylic acid from tpcC. The decarboxylase tpcK converts atrochrysone carboxylic acid to atrochrysone which is further reduced into emodin anthrone. The next step is performed by the emodin anthrone oxygenase tpcL that catalyzes the oxidation of emodinanthrone to emodin. Emodin O-methyltransferase encoded by tpcA catalyzes methylation of the 8-hydroxy group of emodin to form questin. Ring cleavage of questin by questin oxidase tpcI leads to desmethylsulochrin via several intermediates including questin epoxide. Another methylation step catalyzed by tpcM leads to the formation of sulochrin which is further converted to monomethylsulfochrin by tpcH. Finally, the tpcJ catalyzes the conversion of monomethylsulfochrin to trypacidin. Trypacidin is toxic for human pulmonary and bronchial epithelial cells by initiating the intracellular formation of nitric oxide (NO) and hydrogen peroxide (H(2)O(2)), thus triggering host necrotic cell death. The trypacidin pathway is also able to produce endocrocin via a distinct route from the endocrocin Enc pathway. This is Glutathione S-transferase-like protein tpcF from Aspergillus fumigatus (strain ATCC MYA-4609 / CBS 101355 / FGSC A1100 / Af293) (Neosartorya fumigata).